The sequence spans 191 residues: Peptidyl-tRNA hydrolase (191 aa).

TRNA is bound at residue Y17. Residue H22 is the Proton acceptor of the active site. TRNA is bound by residues Y68, N70, and N116.

The protein belongs to the PTH family. As to quaternary structure, monomer.

It is found in the cytoplasm. The enzyme catalyses an N-acyl-L-alpha-aminoacyl-tRNA + H2O = an N-acyl-L-amino acid + a tRNA + H(+). Its function is as follows. Hydrolyzes ribosome-free peptidyl-tRNAs (with 1 or more amino acids incorporated), which drop off the ribosome during protein synthesis, or as a result of ribosome stalling. Functionally, catalyzes the release of premature peptidyl moieties from peptidyl-tRNA molecules trapped in stalled 50S ribosomal subunits, and thus maintains levels of free tRNAs and 50S ribosomes. This is Peptidyl-tRNA hydrolase from Mycobacterium ulcerans (strain Agy99).